A 955-amino-acid polypeptide reads, in one-letter code: Iron-responsive element-binding protein 2 (955 aa).

Cys504, Cys570, and Cys573 together coordinate [4Fe-4S] cluster.

It belongs to the aconitase/IPM isomerase family. The cofactor is [4Fe-4S] cluster. In terms of processing, ubiquitinated and degraded by the proteasome in presence of high level of iron and oxygen.

The protein resides in the cytoplasm. In terms of biological role, RNA-binding protein that binds to iron-responsive elements (IRES), which are stem-loop structures found in the 5'-UTR of ferritin, and delta aminolevulinic acid synthase mRNAs, and in the 3'-UTR of transferrin receptor mRNA. Binding to the IRE element in ferritin results in the repression of its mRNA translation. Binding of the protein to the transferrin receptor mRNA inhibits the degradation of this otherwise rapidly degraded mRNA. In Xenopus laevis (African clawed frog), this protein is Iron-responsive element-binding protein 2 (ireb2).